The sequence spans 69 residues: Putative membrane protein insertion efficiency factor (69 aa).

This sequence belongs to the UPF0161 family.

The protein resides in the cell membrane. Its function is as follows. Could be involved in insertion of integral membrane proteins into the membrane. The polypeptide is Putative membrane protein insertion efficiency factor (Clostridium botulinum (strain 657 / Type Ba4)).